The sequence spans 288 residues: MWQAISQQLSETLMFSYDIVEKVHLSGGDINECYMISDGEQRYFVKINSKDFLSKFQVEAENLRLLRQTDSVTLPELVLIGNTKSNAFIILNFLPTKPLEDTENSYKFGQQLAYLHLWGEQKEYGCDQDNYLGATLQPNAWHKKWSTFFSEQRIGWQLQLLKEKGVTFGVIDEIVEVVARQLLNHNPRPSLIHGDLWHGNVALSAFGPICYDPACYWGDRECDIAMTELFGGFNAEFYRGYEDIAPLPFGYTQRKEIYNLYHILNHCNQFGGHYLEQAQKSIDKILSY.

An ATP-binding site is contributed by 92-94 (NFL). Aspartate 195 acts as the Proton acceptor in catalysis.

It belongs to the fructosamine kinase family.

Functionally, ketoamine kinase that phosphorylates ketoamines on the third carbon of the sugar moiety to generate ketoamine 3-phosphate. The chain is Probable ketoamine kinase VV1_2562 from Vibrio vulnificus (strain CMCP6).